A 160-amino-acid chain; its full sequence is Large ribosomal subunit protein uL11 (160 aa).

This sequence belongs to the universal ribosomal protein uL11 family. In terms of assembly, part of the ribosomal stalk of the 50S ribosomal subunit. Interacts with L10 and the large rRNA to form the base of the stalk. L10 forms an elongated spine to which L12 dimers bind in a sequential fashion forming a multimeric L10(L12)X complex.

Functionally, forms part of the ribosomal stalk which helps the ribosome interact with GTP-bound translation factors. This chain is Large ribosomal subunit protein uL11, found in Methanothermobacter thermautotrophicus (strain ATCC 29096 / DSM 1053 / JCM 10044 / NBRC 100330 / Delta H) (Methanobacterium thermoautotrophicum).